Reading from the N-terminus, the 321-residue chain is Gap junction delta-2 protein (321 aa).

At 1–19 the chain is on the cytoplasmic side; the sequence is MGEWTILERLLEAAVQQHS. Residues 20-42 traverse the membrane as a helical segment; the sequence is TMIGRILLTVVVIFRILIVAIVG. Residues 43-75 are Extracellular-facing; the sequence is ETVYDDEQTMFVCNTLQPGCNQACYDRAFPISH. The chain crosses the membrane as a helical span at residues 76 to 98; the sequence is IRYWVFQIIMVCTPSLCFITYSV. Over 99 to 197 the chain is Cytoplasmic; it reads HQSAKQRERR…KLRRQEGISR (99 aa). Positions 118 to 141 are disordered; that stretch reads RDPPESIGGPGGTGGGGSGGGKRE. Gly residues predominate over residues 125–137; sequence GGPGGTGGGGSGG. Residues 198-220 form a helical membrane-spanning segment; the sequence is FYIIQVVFRNALEIGFLVGQYFL. Topologically, residues 221 to 252 are extracellular; sequence YGFSVPGLYECNRYPCIKEVECYVSRPTEKTV. A helical transmembrane segment spans residues 253–275; that stretch reads FLVFMFAVSGICVVLNLAELNHL. Residues 276-321 lie on the Cytoplasmic side of the membrane; that stretch reads GWRKIKLAVRGAQAKRKSIYEIRNKDLPRVSVPNFGRTQSSDSAYV.

The protein belongs to the connexin family. Delta-type subfamily. A connexon is composed of a hexamer of connexins. As to expression, highly expressed in neurons.

Its subcellular location is the cell membrane. The protein resides in the cell junction. The protein localises to the gap junction. In terms of biological role, one gap junction consists of a cluster of closely packed pairs of transmembrane channels, the connexons, through which materials of low MW diffuse from one cell to a neighboring cell. This chain is Gap junction delta-2 protein (GJD2), found in Homo sapiens (Human).